Here is a 538-residue protein sequence, read N- to C-terminus: Glutamyl-tRNA(Gln) amidotransferase subunit B, mitochondrial (538 aa).

It belongs to the GatB/GatE family. GatB subfamily. Subunit of the heterotrimeric GatCAB amidotransferase (AdT) complex, composed of A, B and C subunits.

Its subcellular location is the mitochondrion. The enzyme catalyses L-glutamyl-tRNA(Gln) + L-glutamine + ATP + H2O = L-glutaminyl-tRNA(Gln) + L-glutamate + ADP + phosphate + H(+). Its function is as follows. Allows the formation of correctly charged Gln-tRNA(Gln) through the transamidation of misacylated Glu-tRNA(Gln) in the mitochondria. The reaction takes place in the presence of glutamine and ATP through an activated gamma-phospho-Glu-tRNA(Gln). The polypeptide is Glutamyl-tRNA(Gln) amidotransferase subunit B, mitochondrial (Dictyostelium discoideum (Social amoeba)).